Consider the following 407-residue polypeptide: Homeobox even-skipped homolog protein 1 (407 aa).

Disordered stretches follow at residues Glu29 to Tyr120 and Glu137 to Ala179. Residues Asp102–Asp114 show a composition bias toward polar residues. Positions Met183–Arg242 form a DNA-binding region, homeobox.

Belongs to the even-skipped homeobox family.

The protein resides in the nucleus. Its function is as follows. May play a role in the specification of neuronal cell types. In Homo sapiens (Human), this protein is Homeobox even-skipped homolog protein 1 (EVX1).